A 115-amino-acid polypeptide reads, in one-letter code: Large ribosomal subunit protein bL19 (115 aa).

Belongs to the bacterial ribosomal protein bL19 family.

Functionally, this protein is located at the 30S-50S ribosomal subunit interface and may play a role in the structure and function of the aminoacyl-tRNA binding site. The chain is Large ribosomal subunit protein bL19 from Lactobacillus acidophilus (strain ATCC 700396 / NCK56 / N2 / NCFM).